A 175-amino-acid chain; its full sequence is Large ribosomal subunit protein uL10 (175 aa).

This sequence belongs to the universal ribosomal protein uL10 family. As to quaternary structure, part of the ribosomal stalk of the 50S ribosomal subunit. The N-terminus interacts with L11 and the large rRNA to form the base of the stalk. The C-terminus forms an elongated spine to which L12 dimers bind in a sequential fashion forming a multimeric L10(L12)X complex.

Its function is as follows. Forms part of the ribosomal stalk, playing a central role in the interaction of the ribosome with GTP-bound translation factors. This Alkalilimnicola ehrlichii (strain ATCC BAA-1101 / DSM 17681 / MLHE-1) protein is Large ribosomal subunit protein uL10.